The primary structure comprises 419 residues: Transcription termination factor Rho (419 aa).

A Rho RNA-BD domain is found at 48 to 123 (DIFGDGVLEI…LKVNEVNFDK (76 aa)). RNA-binding regions lie at residues 61–66 (GFGFLR), 78–80 (DIY), and 108–110 (ERY). ATP-binding positions include 169–174 (GRGQRG), 181–186 (KAGKTM), and Arg212. The tract at residues 284 to 288 (VLTGG) is RNA-binding 2.

Belongs to the Rho family. As to quaternary structure, homohexamer. The homohexamer assembles into an open ring structure.

In terms of biological role, facilitates transcription termination by a mechanism that involves Rho binding to the nascent RNA, activation of Rho's RNA-dependent ATPase activity, and release of the mRNA from the DNA template. The protein is Transcription termination factor Rho of Escherichia coli O157:H7.